A 466-amino-acid chain; its full sequence is Uridine kinase-like protein 3 (466 aa).

The interval 41 to 246 (HGQPFVIGVA…IVQHIHTKLG (206 aa)) is uridine kinase. Positions 256–466 (NLYVIQSTFQ…GDRYFGTDDE (211 aa)) are uracil phosphoribosyltransferase. Residues K280, R289, and 323-326 (CKKL) each bind GTP. 2 residues coordinate 5-phospho-alpha-D-ribose 1-diphosphate: R333 and R358. R378 is a binding site for GTP. 5-phospho-alpha-D-ribose 1-diphosphate-binding positions include D384, 389–392 (TGNS), and E455. 454-456 (GEF) serves as a coordination point for uracil.

It in the N-terminal section; belongs to the uridine kinase family. In the C-terminal section; belongs to the UPRTase family. Mg(2+) serves as cofactor.

The enzyme catalyses UMP + diphosphate = 5-phospho-alpha-D-ribose 1-diphosphate + uracil. It carries out the reaction cytidine + ATP = CMP + ADP + H(+). The catalysed reaction is uridine + ATP = UMP + ADP + H(+). It functions in the pathway pyrimidine metabolism; UMP biosynthesis via salvage pathway; UMP from uracil: step 1/1. The protein operates within pyrimidine metabolism; CTP biosynthesis via salvage pathway; CTP from cytidine: step 1/3. Its pathway is pyrimidine metabolism; UMP biosynthesis via salvage pathway; UMP from uridine: step 1/1. Its activity is regulated as follows. Allosterically activated by GTP. Functionally, involved in the pyrimidine salvage pathway. The uracil phosphoribosyltransferase (UPRT) activity, that catalyzes the conversion of uracil and 5-phospho-alpha-D-ribose 1-diphosphate (PRPP) to UMP and diphosphate, is unsure. This chain is Uridine kinase-like protein 3 (UKL3), found in Arabidopsis thaliana (Mouse-ear cress).